We begin with the raw amino-acid sequence, 176 residues long: Nucleoside triphosphate/diphosphate phosphatase (176 aa).

The active-site Proton donor is the Arg23. Mg(2+) contacts are provided by Asn87, Asp103, Asp105, Asp107, Asp120, and Glu123.

It belongs to the Ntdp family. It depends on Mg(2+) as a cofactor.

It catalyses the reaction a ribonucleoside 5'-triphosphate + H2O = a ribonucleoside 5'-diphosphate + phosphate + H(+). The catalysed reaction is a ribonucleoside 5'-diphosphate + H2O = a ribonucleoside 5'-phosphate + phosphate + H(+). Functionally, has nucleoside phosphatase activity towards nucleoside triphosphates and nucleoside diphosphates. The sequence is that of Nucleoside triphosphate/diphosphate phosphatase from Lactococcus lactis subsp. cremoris (strain MG1363).